The following is a 144-amino-acid chain: Cell division protein SepF (144 aa).

The segment covering Glu-14–Glu-31 has biased composition (acidic residues). Positions Glu-14 to Arg-41 are disordered.

It belongs to the SepF family. Homodimer. Interacts with FtsZ.

It is found in the cytoplasm. Its function is as follows. Cell division protein that is part of the divisome complex and is recruited early to the Z-ring. Probably stimulates Z-ring formation, perhaps through the cross-linking of FtsZ protofilaments. Its function overlaps with FtsA. This chain is Cell division protein SepF, found in Lactobacillus johnsonii (strain CNCM I-12250 / La1 / NCC 533).